A 353-amino-acid chain; its full sequence is Hydrazine synthase subunit gamma (353 aa).

Residues 1-39 form the signal peptide; that stretch reads MAREMRLGGKERMKTGVVKIGLVAALGVVGLISAGGVYA. The heme c site is built by Cys-102, Cys-105, and His-106. Residues Asp-118, Leu-119, Glu-122, Gly-123, Ser-126, Asn-129, Leu-139, and Pro-141 each contribute to the Ca(2+) site. Heme c is bound by residues Cys-165, Cys-225, Cys-228, and His-229. In terms of domain architecture, Cytochrome c spans 209–353; it reads EAQKRGQKIF…QDLVEYLKAL (145 aa). Residues Asp-296, Ser-306, Gly-307, and Thr-308 each coordinate Ca(2+). His-332 serves as a coordination point for heme c.

In terms of assembly, part of the hydrazine synthase complex that forms an elongated dimer of heterotrimers composed of one alpha, one beta and one gamma subunit. Heme c serves as cofactor.

It localises to the anammoxosome. It catalyses the reaction hydrazine + 3 Fe(III)-[cytochrome c] + H2O = nitric oxide + 3 Fe(II)-[cytochrome c] + NH4(+) + 2 H(+). It participates in nitrogen metabolism. In terms of biological role, component of the hydrazine synthase complex that catalyzes the condensation of nitric oxide (NO) with ammonium to form hydrazine. The gamma subunit catalyzes the first half-reaction, i.e. the three-electron reduction of nitric oxide to hydroxylamine; it may obtain electrons from the triheme cytochrome c kuste2854. Is involved in anaerobic ammonium oxidation (anammox), a biological process in which nitrite is used as the electron acceptor in the conversion of ammonium to dinitrogen gas (N2) and water; this bacterial process has a major role in the Earth's nitrogen cycle and has been estimated to synthesize up to 50% of the dinitrogen gas emitted into our atmosphere from the oceans. The chain is Hydrazine synthase subunit gamma from Kuenenia stuttgartiensis.